A 437-amino-acid polypeptide reads, in one-letter code: Serine--tRNA ligase (437 aa).

244 to 246 (TAE) provides a ligand contact to L-serine. ATP is bound at residue 275 to 277 (RSE). Glu298 provides a ligand contact to L-serine. 362–365 (EISS) contacts ATP. L-serine is bound at residue Ser397.

This sequence belongs to the class-II aminoacyl-tRNA synthetase family. Type-1 seryl-tRNA synthetase subfamily. As to quaternary structure, homodimer. The tRNA molecule binds across the dimer.

Its subcellular location is the cytoplasm. The catalysed reaction is tRNA(Ser) + L-serine + ATP = L-seryl-tRNA(Ser) + AMP + diphosphate + H(+). It carries out the reaction tRNA(Sec) + L-serine + ATP = L-seryl-tRNA(Sec) + AMP + diphosphate + H(+). The protein operates within aminoacyl-tRNA biosynthesis; selenocysteinyl-tRNA(Sec) biosynthesis; L-seryl-tRNA(Sec) from L-serine and tRNA(Sec): step 1/1. Functionally, catalyzes the attachment of serine to tRNA(Ser). Is also able to aminoacylate tRNA(Sec) with serine, to form the misacylated tRNA L-seryl-tRNA(Sec), which will be further converted into selenocysteinyl-tRNA(Sec). The chain is Serine--tRNA ligase from Nitrosomonas europaea (strain ATCC 19718 / CIP 103999 / KCTC 2705 / NBRC 14298).